The chain runs to 344 residues: MKEELHAIRDEAIASVEEAKDMKSLQDLKVKYLGKKGSLTSVLRGMGKLSKEERPVIGEIANQVREQITAALDQKTEKMEEEALNEKLEKETIDVTLPGNPVHIGGKHLLTRVVEEIEDLFIGMGYEVKEGPEVETDYFNFEALNLPKNHPARDMQDTFFITNELLLRTQTSPVQARTMQAYNGEKPIKMICPGKVYRRDTDDATHSHQFRQIEGLVIDKDITLSDLKGTLDIFAKKMFGEDREIRLRPSFFPFTEPSVEMDVSCKVCSGQGCSVCKQTGWIEILGGGMVHPRVLEMSGYDPKVYSGFAFGMGQERIAMLKYGVNDIRHFYTNDIRFLTQFHQA.

A Mg(2+)-binding site is contributed by E256.

It belongs to the class-II aminoacyl-tRNA synthetase family. Phe-tRNA synthetase alpha subunit type 1 subfamily. As to quaternary structure, tetramer of two alpha and two beta subunits. Mg(2+) is required as a cofactor.

Its subcellular location is the cytoplasm. The catalysed reaction is tRNA(Phe) + L-phenylalanine + ATP = L-phenylalanyl-tRNA(Phe) + AMP + diphosphate + H(+). This is Phenylalanine--tRNA ligase alpha subunit from Oceanobacillus iheyensis (strain DSM 14371 / CIP 107618 / JCM 11309 / KCTC 3954 / HTE831).